The following is a 363-amino-acid chain: D-xylulose reductase (363 aa).

Zn(2+) is bound by residues C41, H66, and E159. 183–188 (GAGPVG) contributes to the NAD(+) binding site.

This sequence belongs to the zinc-containing alcohol dehydrogenase family. It depends on Zn(2+) as a cofactor.

It carries out the reaction xylitol + NAD(+) = D-xylulose + NADH + H(+). Its pathway is carbohydrate degradation; L-arabinose degradation via L-arabinitol; D-xylulose 5-phosphate from L-arabinose (fungal route): step 4/5. The protein is D-xylulose reductase (XYL2) of Scheffersomyces stipitis (strain ATCC 58785 / CBS 6054 / NBRC 10063 / NRRL Y-11545) (Yeast).